A 105-amino-acid chain; its full sequence is Heat shock protein HspQ (105 aa).

It belongs to the HspQ family.

The protein localises to the cytoplasm. Involved in the degradation of certain denaturated proteins, including DnaA, during heat shock stress. This is Heat shock protein HspQ from Yersinia enterocolitica serotype O:8 / biotype 1B (strain NCTC 13174 / 8081).